The primary structure comprises 240 residues: Proteasome subunit alpha (240 aa).

Belongs to the peptidase T1A family. In terms of assembly, the 20S proteasome core is composed of 14 alpha and 14 beta subunits that assemble into four stacked heptameric rings, resulting in a barrel-shaped structure. The two inner rings, each composed of seven catalytic beta subunits, are sandwiched by two outer rings, each composed of seven alpha subunits. The catalytic chamber with the active sites is on the inside of the barrel. Has a gated structure, the ends of the cylinder being occluded by the N-termini of the alpha-subunits. Is capped at one or both ends by the proteasome regulatory ATPase, PAN.

It is found in the cytoplasm. With respect to regulation, the formation of the proteasomal ATPase PAN-20S proteasome complex, via the docking of the C-termini of PAN into the intersubunit pockets in the alpha-rings, triggers opening of the gate for substrate entry. Interconversion between the open-gate and close-gate conformations leads to a dynamic regulation of the 20S proteasome proteolysis activity. Functionally, component of the proteasome core, a large protease complex with broad specificity involved in protein degradation. This chain is Proteasome subunit alpha, found in Methanoculleus marisnigri (strain ATCC 35101 / DSM 1498 / JR1).